We begin with the raw amino-acid sequence, 345 residues long: Platelet-derived growth factor C (345 aa).

Positions 1-22 (MSLFGLLLLTSALAGQRQGTQA) are cleaved as a signal peptide. 2 N-linked (GlcNAc...) asparagine glycosylation sites follow: Asn25 and Asn55. Positions 46–163 (HERIITVSTN…PGFCIHYNIV (118 aa)) constitute a CUB domain. 4 disulfides stabilise this stretch: Cys104/Cys124, Cys250/Cys294, Cys280/Cys335, and Cys287/Cys337.

Belongs to the PDGF/VEGF growth factor family. In terms of assembly, homodimer; disulfide-linked. Interacts with PDGFRA homodimers, and with heterodimers formed by PDGFRA and PDGFRB. Interacts (via CUB domain) with PLAT (via kringle domain). In terms of processing, proteolytic removal of the N-terminal CUB domain releasing the core domain is necessary for unmasking the receptor-binding epitopes of the core domain. Cleavage after basic residues in the hinge region (region connecting the CUB and growth factor domains) gives rise to the receptor-binding form. Cleaved by PLAT and PLG. Post-translationally, sumoylated with SUMO1. N-glycosylated. In terms of tissue distribution, expressed in the fallopian tube, vascular smooth muscle cells in kidney, breast and colon and in visceral smooth muscle of the gastrointestinal tract. Highly expressed in retinal pigment epithelia. Expressed in medulloblastoma. In the kidney, constitutively expressed in parietal epithelial cells of Bowman's capsule, tubular epithelial cells and in arterial endothelial cells (at protein level). Highly expressed in the platelets, prostate, testis and uterus. Higher expression is observed in uterine leiomyomata. Weaker expression in the spleen, thymus, heart, pancreas, liver, ovary cells and small intestine, and negligible expression in the colon and peripheral blood leukocytes.

The protein resides in the cytoplasm. The protein localises to the cytosol. It is found in the secreted. Its subcellular location is the nucleus. It localises to the cytoplasmic granule. The protein resides in the cell membrane. Functionally, growth factor that plays an essential role in the regulation of embryonic development, cell proliferation, cell migration, survival and chemotaxis. Potent mitogen and chemoattractant for cells of mesenchymal origin. Required for normal skeleton formation during embryonic development, especially for normal development of the craniofacial skeleton and for normal development of the palate. Required for normal skin morphogenesis during embryonic development. Plays an important role in wound healing, where it appears to be involved in three stages: inflammation, proliferation and remodeling. Plays an important role in angiogenesis and blood vessel development. Involved in fibrotic processes, in which transformation of interstitial fibroblasts into myofibroblasts plus collagen deposition occurs. The CUB domain has mitogenic activity in coronary artery smooth muscle cells, suggesting a role beyond the maintenance of the latency of the PDGF domain. In the nucleus, PDGFC seems to have additional function. This chain is Platelet-derived growth factor C (PDGFC), found in Homo sapiens (Human).